A 372-amino-acid polypeptide reads, in one-letter code: DNA replication and repair protein RecF (372 aa).

30 to 37 is a binding site for ATP; it reads GDNGQGKT.

This sequence belongs to the RecF family.

Its subcellular location is the cytoplasm. The RecF protein is involved in DNA metabolism; it is required for DNA replication and normal SOS inducibility. RecF binds preferentially to single-stranded, linear DNA. It also seems to bind ATP. The chain is DNA replication and repair protein RecF from Ruminiclostridium cellulolyticum (strain ATCC 35319 / DSM 5812 / JCM 6584 / H10) (Clostridium cellulolyticum).